A 75-amino-acid chain; its full sequence is uncharacterized protein (75 aa).

Residues 44 to 64 (IINMIVIWAALIALFVKLYIL) traverse the membrane as a helical segment.

Its subcellular location is the host membrane. This is an uncharacterized protein from Ostreid herpesvirus 1 (isolate France) (OsHV-1).